The following is a 436-amino-acid chain: uncharacterized protein (436 aa).

A signal peptide spans 1–18 (MMKRFVALSMAIFSLSFA).

This is an uncharacterized protein from Aquifex aeolicus (strain VF5).